The primary structure comprises 49 residues: Large ribosomal subunit protein eL40 (49 aa).

This sequence belongs to the eukaryotic ribosomal protein eL40 family.

This Methanopyrus kandleri (strain AV19 / DSM 6324 / JCM 9639 / NBRC 100938) protein is Large ribosomal subunit protein eL40.